The following is a 237-amino-acid chain: Terpene cyclase spyD (237 aa).

The next 7 membrane-spanning stretches (helical) occupy residues 17–37 (IYNV…IVTV), 47–67 (AIPL…VLVY), 71–91 (YLLF…IVYG), 109–129 (HLPL…YALA), 138–158 (IHGG…CQLL), 167–187 (SWTM…GEFL), and 206–226 (WCTG…WYMG).

It belongs to the paxB family.

The protein localises to the membrane. It catalyses the reaction (S)-(2E,6E,10E)-epoxygeranylgeranyl-triacetate lactone = sartorypyrone F. The enzyme catalyses (S)-(2E,6E,10E)-epoxygeranylgeranyl-triacetate lactone = sartorypyrone D. It participates in secondary metabolite biosynthesis; terpenoid biosynthesis. In terms of biological role, terpene cyclase; part of the gene cluster that mediates the biosynthesis of meroterpenoids called sartorypyrones. Within the pathway, spyD catalyzes the cyclization of epoxygeranylgeranyl-triacetate lactone. SpyD exhibits promiscuous activity, resulting in the formation of bicyclic sartorypyrone F and monocyclic sartorypyrone D. The biosynthesis of sartorypyrones begins with the production of triacetic acid lactone (TAL) by the NR-PKS spyA using one molecule of acetyl-CoA and two molecules of malonyl-CoA. The prenyltransferase spyF then conjugates geranylgeranyl pyrophosphate (GGPP) to TAL to form geranylgeranyl-triacetate lactone, for which the pathway-specific geranylgeranyl pyrophosphate synthase (GGPS) spyE is required to provide GGPP. Subsequently, geranylgeranyl-triacetate lactone is epoxidized at the terminal olein by the FAD-dependent monooxygenase spyC, followed by cyclization of the terpenoid component catalyzed by the terpene cyclase spyD to produce both the bicyclic sartorypyrone F and the monocyclic sartorypyrone D. Finally, the last step of the biosynthesis involves the acetylation of the meroterpenoids sartorypyrones D and F by the acetyltransferase SpyB to produce sartorypyrones A and G, respectively. This is Terpene cyclase spyD from Aspergillus fumigatus (strain ATCC MYA-4609 / CBS 101355 / FGSC A1100 / Af293) (Neosartorya fumigata).